Here is a 247-residue protein sequence, read N- to C-terminus: 2,3-bisphosphoglycerate-dependent phosphoglycerate mutase (247 aa).

Substrate-binding positions include R8–N15, T21–G22, R60, E87–Y90, K98, R114–R115, and G183–N184. The active-site Tele-phosphohistidine intermediate is the H9. Residue E87 is the Proton donor/acceptor of the active site.

This sequence belongs to the phosphoglycerate mutase family. BPG-dependent PGAM subfamily. Homodimer.

The enzyme catalyses (2R)-2-phosphoglycerate = (2R)-3-phosphoglycerate. The protein operates within carbohydrate degradation; glycolysis; pyruvate from D-glyceraldehyde 3-phosphate: step 3/5. Its function is as follows. Catalyzes the interconversion of 2-phosphoglycerate and 3-phosphoglycerate. This chain is 2,3-bisphosphoglycerate-dependent phosphoglycerate mutase, found in Methylibium petroleiphilum (strain ATCC BAA-1232 / LMG 22953 / PM1).